A 1133-amino-acid polypeptide reads, in one-letter code: Envelopment polyprotein (1133 aa).

Residues 1 to 16 form the signal peptide; that stretch reads MWSLLLLAALVGQGFA. The Lumenal portion of the chain corresponds to 17–484; that stretch reads LKNVFDMRIQ…PGFHGWATAA (468 aa). Disulfide bonds link Cys61–Cys155, Cys107–Cys126, Cys131–Cys136, Cys173–Cys183, Cys208–Cys245, Cys232–Cys349, Cys374–Cys433, Cys378–Cys387, Cys403–Cys422, and Cys450–Cys473. A glycan (N-linked (GlcNAc...) asparagine; by host) is linked at Asn132. N-linked (GlcNAc...) asparagine; by host glycans are attached at residues Asn233 and Asn345. N-linked (GlcNAc...) asparagine; by host glycosylation is present at Asn397. Residues 485-504 form a helical membrane-spanning segment; that stretch reads LLITFCFGWVLIPACTLAIL. At 505-626 the chain is on the cytoplasmic side; that stretch reads LVLKFFANIL…NLFRYKSRCY (122 aa). A binding to the ribonucleoprotein region spans residues 514–531; that stretch reads LHTSNQENRFKAILRKIK. CCHC-type zinc fingers lie at residues 543–563 and 568–589; these read CEICKYECETLKELKAHNLSC and CPYCFTHCEPTETAIQAHYKVC. Binding to the ribonucleoprotein regions lie at residues 586–603, 590–601, and 609–623; these read YKVCQATHRFREDLKKTV, QATHRFREDLKK, and GPGCYRTLNLFRYKS. An ITAM domain is found at 609–632; sequence GPGCYRTLNLFRYKSRCYILTMWT. The short motif at 613–616 is the YxxL element; the sequence is YRTL. Residues 627-647 traverse the membrane as a helical segment; sequence ILTMWTLLLIIESILWAASAA. Residues 648-1105 are Lumenal-facing; that stretch reads EIPLVPLWTD…VMGIINGNWV (458 aa). Disulfide bonds link Cys733/Cys768, Cys737/Cys775, Cys749/Cys883, Cys763/Cys894, Cys778/Cys902, Cys804/Cys813, Cys821/Cys830, and Cys861/Cys865. Residues 755 to 775 are fusion loop; the sequence is YEYENSWACNPPDCPGVGTGC. Residue Asn926 is glycosylated (N-linked (GlcNAc...) asparagine; by host). Cystine bridges form between Cys968–Cys998, Cys991–Cys1043, Cys1008–Cys1013, Cys1044–Cys1049, and Cys1083–Cys1087. The helical transmembrane segment at 1106–1125 threads the bilayer; sequence VLIVLCVLLLFSLILLSILC. Residues 1120–1133 form a binding to the ribonucleoprotein region; it reads LLSILCPVRKHKKS. Residues 1126–1133 are Cytoplasmic-facing; sequence PVRKHKKS.

It belongs to the hantavirus envelope glycoprotein family. As to quaternary structure, homodimer. Homotetramer; forms heterotetrameric Gn-Gc spikes in the pre-fusion conformation. Interacts (via C-terminus) with the nucleoprotein. Interacts with host TUFM; this interaction contributes to the virus-induced degradation of mitochondria by autophagy, which leads to degradation of host MAVS and inhibition of type I interferon (IFN) responses. Interacts with host MAP1LC3B; this interaction contributes to the virus-induced degradation of mitochondria by autophagy, which leads to degradation of host MAVS and inhibition of type I interferon (IFN) responses. Homodimer. Homotetramer; forms heterotetrameric Gn-Gc spikes in the pre-fusion conformation. Homotrimer; forms homotrimer in the post-fusion conformation at acidic pH. Interacts (via C-terminus) with the nucleoprotein. Envelope polyprotein precursor is quickly cleaved in vivo just after synthesis, presumably by host signal peptidase.

Its subcellular location is the virion membrane. The protein resides in the host cell surface. It is found in the host Golgi apparatus membrane. It localises to the host endoplasmic reticulum membrane. The protein localises to the host mitochondrion. Forms homotetramers with glycoprotein C at the surface of the virion. Attaches the virion to host cell receptors including integrin ITGAV/ITGB3. This attachment induces virion internalization predominantly through clathrin-dependent endocytosis. Mediates the assembly and budding of infectious virus particles through its interaction with the nucleocapsid protein and the viral genome. May dysregulate normal immune and endothelial cell responses through an ITAM motif. Translocates to mitochondria, binds to host TUFM and recruits MAP1LC3B. These interactions induce mitochondrial autophagy and therefore destruction of host MAVS leading to inhibition of type I interferon (IFN) responses. Concomitant breakdown of glycoprotein N is apparently prevented by the nucleoprotein that may inhibit Gn-stimulated autophagosome-lysosome fusion. Interacts with the viral genomic RNA. Its function is as follows. Forms homotetramers with glycoprotein N at the surface of the virion. Attaches the virion to host cell receptors including integrin ITGAV/ITGB3. This attachment induces virion internalization predominantly through clathrin-dependent endocytosis. Class II fusion protein that promotes fusion of viral membrane with host endosomal membrane after endocytosis of the virion. The polypeptide is Envelopment polyprotein (GP) (Homo sapiens (Human)).